A 136-amino-acid polypeptide reads, in one-letter code: Large ribosomal subunit protein uL16 (136 aa).

This sequence belongs to the universal ribosomal protein uL16 family. In terms of assembly, part of the 50S ribosomal subunit.

Its function is as follows. Binds 23S rRNA and is also seen to make contacts with the A and possibly P site tRNAs. In Citrobacter koseri (strain ATCC BAA-895 / CDC 4225-83 / SGSC4696), this protein is Large ribosomal subunit protein uL16.